A 1169-amino-acid chain; its full sequence is Pesticidal crystal protein Cry8Ba (1169 aa).

Residues 1 to 26 (MSPNNQNEYEIIDATPSTSVSNDSNR) are disordered. Over residues 15–25 (TPSTSVSNDSN) the composition is skewed to polar residues.

It belongs to the delta endotoxin family.

In terms of biological role, promotes colloidosmotic lysis by binding to the midgut epithelial cells of insects. Active on various scarabaeid beetles. The protein is Pesticidal crystal protein Cry8Ba (cry8Ba) of Bacillus thuringiensis serovar kumamotoensis.